Here is a 321-residue protein sequence, read N- to C-terminus: Lipoyl synthase (321 aa).

[4Fe-4S] cluster is bound by residues C68, C73, C79, C94, C98, C101, and S308. The Radical SAM core domain maps to 80-297 (FNHGTATFMI…RVFAEEIGFT (218 aa)).

The protein belongs to the radical SAM superfamily. Lipoyl synthase family. Requires [4Fe-4S] cluster as cofactor.

It localises to the cytoplasm. The catalysed reaction is [[Fe-S] cluster scaffold protein carrying a second [4Fe-4S](2+) cluster] + N(6)-octanoyl-L-lysyl-[protein] + 2 oxidized [2Fe-2S]-[ferredoxin] + 2 S-adenosyl-L-methionine + 4 H(+) = [[Fe-S] cluster scaffold protein] + N(6)-[(R)-dihydrolipoyl]-L-lysyl-[protein] + 4 Fe(3+) + 2 hydrogen sulfide + 2 5'-deoxyadenosine + 2 L-methionine + 2 reduced [2Fe-2S]-[ferredoxin]. Its pathway is protein modification; protein lipoylation via endogenous pathway; protein N(6)-(lipoyl)lysine from octanoyl-[acyl-carrier-protein]: step 2/2. In terms of biological role, catalyzes the radical-mediated insertion of two sulfur atoms into the C-6 and C-8 positions of the octanoyl moiety bound to the lipoyl domains of lipoate-dependent enzymes, thereby converting the octanoylated domains into lipoylated derivatives. This is Lipoyl synthase from Shewanella woodyi (strain ATCC 51908 / MS32).